The primary structure comprises 222 residues: Collectrin (222 aa).

Residues 1 to 14 (MLWALFFLVTTIHA) form the signal peptide. At 15 to 141 (ELCHPDAENA…LAPPMEPSVP (127 aa)) the chain is on the extracellular side. The region spanning 21-222 (AENAFKVRLS…LTEDERLTPL (202 aa)) is the Collectrin-like domain. N-linked (GlcNAc...) asparagine glycosylation is found at Asn76 and Asn93. The helical transmembrane segment at 142–162 (VWIIVFGVIFCIVTVAIALLV) threads the bilayer. The Cytoplasmic segment spans residues 163–222 (LSGIRQRRRNNKGPPGVEDAEDKCENIITIENGIPCDPLDMKGGHINDGFLTEDERLTPL). 2 positions are modified to phosphothreonine: Thr214 and Thr220.

The protein belongs to the CLTRN family. Monomer. Homodimer. Homodimer; dimerization prevents CLTRN cleavage by BACE2. Interacts with SNAPIN. Interacts with SLC6A18; this interaction regulates the trafficking of SLC6A18 to the cell membrane and its amino acid transporter activity. Interacts with SLC6A19; this interaction regulates the trafficking of SLC6A19 to the cell membrane and its amino acid transporter activity. Interacts with SLC6A20B. Post-translationally, glycosylated. Glycosylation is required for plasma membrane localization and for its cleavage by BACE2. Proteolytically processed in pancreatic beta cells by BACE2 leading to the generation and extracellular release of soluble CLTRN, and a corresponding cell-associated C-terminal fragment which is later cleaved by gamma-secretase. This shedding process inactivates CLTRN. Three cleavage sites have been identified for BACE2, two clustered sites after Phe-116 and Leu-118 and a more membrane proximal site at Phe-125; the preferred BACE2 cleavage site seems to be between Phe-125 and Leu-126, Phe-116 and Leu-118 act as alternative sites. Expressed on the apical surface of the proximal tubules in the renal cortex (at protein level). Kidney; collecting ducts and proximal tubule. Pancreas; beta cells of islets. Expressed in the cerebral cortex, hippocampus, brainstem and cerebellum.

Its subcellular location is the cell membrane. Its function is as follows. Plays an important role in amino acid transport by acting as binding partner of amino acid transporters SLC6A18 and SLC6A19, regulating their trafficking on the cell surface and their activity. May also play a role in trafficking of amino acid transporters SLC3A1 and SLC7A9 to the renal cortical cell membrane. Regulator of SNARE complex function. Stimulator of beta cell replication. This Mus musculus (Mouse) protein is Collectrin.